A 196-amino-acid polypeptide reads, in one-letter code: Probable splicing factor, arginine/serine-rich 4 (196 aa).

The RRM domain maps to 19-97; sequence TSLKIDNLSY…RELRVTLAKY (79 aa). Residues 91 to 106 show a composition bias toward basic and acidic residues; the sequence is RVTLAKYDRPSDERGG. Residues 91-196 are disordered; that stretch reads RVTLAKYDRP…SPSRSRSNSR (106 aa). Basic residues predominate over residues 112 to 141; it reads GRRRSRSPRRRSRSPRYSRSRSPRRSRSRT. 2 stretches are compositionally biased toward basic and acidic residues: residues 145 to 160 and 167 to 176; these read PSRDRRDSPDRRDNSR and PPREDGSPKE. Residues 184 to 196 are compositionally biased toward low complexity; the sequence is ASRSPSRSRSNSR.

It belongs to the splicing factor SR family. Extensively phosphorylated on serine residues in the RS domain.

Its subcellular location is the nucleus. May play a functionally redundant role in embryogenesis. The protein is Probable splicing factor, arginine/serine-rich 4 (rsp-4) of Caenorhabditis elegans.